A 446-amino-acid polypeptide reads, in one-letter code: Tubulin gamma chain (446 aa).

142 to 148 (AGGTGSG) serves as a coordination point for GTP.

Belongs to the tubulin family. As to quaternary structure, interacts with mto1. Interacts with mto2.

It is found in the cytoplasm. The protein localises to the cytoskeleton. Its subcellular location is the microtubule organizing center. The protein resides in the spindle pole body. In terms of biological role, tubulin is the major constituent of microtubules. The gamma chain is found at microtubule organizing centers (MTOC) such as the spindle poles or the centrosome, suggesting that it is involved in the minus-end nucleation of microtubule assembly. In Schizosaccharomyces pombe (strain 972 / ATCC 24843) (Fission yeast), this protein is Tubulin gamma chain.